The primary structure comprises 160 residues: Cytochrome b6-f complex subunit 4 (160 aa).

The next 3 helical transmembrane spans lie at 36-56, 95-115, and 131-151; these read LLYI…GLSV, LLGV…PFIE, and TVFL…ALPI.

This sequence belongs to the cytochrome b family. PetD subfamily. In terms of assembly, the 4 large subunits of the cytochrome b6-f complex are cytochrome b6, subunit IV (17 kDa polypeptide, petD), cytochrome f and the Rieske protein, while the 4 small subunits are petG, petL, petM and petN. The complex functions as a dimer.

The protein localises to the plastid. It is found in the chloroplast thylakoid membrane. Component of the cytochrome b6-f complex, which mediates electron transfer between photosystem II (PSII) and photosystem I (PSI), cyclic electron flow around PSI, and state transitions. The protein is Cytochrome b6-f complex subunit 4 of Chlorella vulgaris (Green alga).